We begin with the raw amino-acid sequence, 816 residues long: Leucine--tRNA ligase (816 aa).

The 'HIGH' region motif lies at 40 to 51 (SYPSGSQLHAGH). The 'KMSKS' region signature appears at 576–580 (KMSKS). Lysine 579 lines the ATP pocket.

Belongs to the class-I aminoacyl-tRNA synthetase family.

It is found in the cytoplasm. It carries out the reaction tRNA(Leu) + L-leucine + ATP = L-leucyl-tRNA(Leu) + AMP + diphosphate. This chain is Leucine--tRNA ligase, found in Clostridium perfringens (strain SM101 / Type A).